The chain runs to 465 residues: tRNA modification GTPase MnmE (465 aa).

(6S)-5-formyl-5,6,7,8-tetrahydrofolate contacts are provided by arginine 25, glutamate 87, and arginine 126. The 165-residue stretch at 222–386 (TIRVVLRGLP…LIERLVQFAE (165 aa)) folds into the TrmE-type G domain. GTP-binding positions include 232-237 (NAGKSR), 251-257 (TDQAGTT), and 276-279 (DTAG). Mg(2+)-binding residues include serine 236 and threonine 257. Lysine 465 is a binding site for (6S)-5-formyl-5,6,7,8-tetrahydrofolate.

This sequence belongs to the TRAFAC class TrmE-Era-EngA-EngB-Septin-like GTPase superfamily. TrmE GTPase family. Homodimer. Heterotetramer of two MnmE and two MnmG subunits. K(+) is required as a cofactor.

Its subcellular location is the cytoplasm. Its function is as follows. Exhibits a very high intrinsic GTPase hydrolysis rate. Involved in the addition of a carboxymethylaminomethyl (cmnm) group at the wobble position (U34) of certain tRNAs, forming tRNA-cmnm(5)s(2)U34. The sequence is that of tRNA modification GTPase MnmE from Rhodopirellula baltica (strain DSM 10527 / NCIMB 13988 / SH1).